The following is a 349-amino-acid chain: sn-glycerol-3-phosphate import ATP-binding protein UgpC (349 aa).

The region spanning 4–235 (VTLTAVRKVY…PASTFVASFM (232 aa)) is the ABC transporter domain. 37-44 (GPSGCGKS) serves as a coordination point for ATP.

Belongs to the ABC transporter superfamily. sn-glycerol-3-phosphate importer (TC 3.A.1.1.3) family. In terms of assembly, the complex is composed of two ATP-binding proteins (UgpC), two transmembrane proteins (UgpA and UgpE) and a solute-binding protein (UgpB).

Its subcellular location is the cell inner membrane. It carries out the reaction sn-glycerol 3-phosphate(out) + ATP + H2O = sn-glycerol 3-phosphate(in) + ADP + phosphate + H(+). Its function is as follows. Part of the ABC transporter complex UgpBAEC involved in sn-glycerol-3-phosphate (G3P) import. Responsible for energy coupling to the transport system. The polypeptide is sn-glycerol-3-phosphate import ATP-binding protein UgpC (Jannaschia sp. (strain CCS1)).